Here is a 597-residue protein sequence, read N- to C-terminus: Translation initiation factor IF-2 (597 aa).

Composition is skewed to low complexity over residues 57 to 73 (GGDA…AATA) and 81 to 95 (TPAA…PASD). Residues 57–96 (GGDAAPAAASAPAAATAEPEEADETPAAAAQADAEPASDL) are disordered. One can recognise a tr-type G domain in the interval 98–271 (HRAPVVTIMG…ELEDLRADPK (174 aa)). Positions 107 to 114 (GHVDHGKT) are G1. 107-114 (GHVDHGKT) provides a ligand contact to GTP. A G2 region spans residues 132–136 (GITQH). A G3 region spans residues 153-156 (DTPG). GTP-binding positions include 153-157 (DTPGH) and 207-210 (NKVD). The segment at 207–210 (NKVD) is G4. Residues 243-245 (SAK) form a G5 region.

This sequence belongs to the TRAFAC class translation factor GTPase superfamily. Classic translation factor GTPase family. IF-2 subfamily.

Its subcellular location is the cytoplasm. In terms of biological role, one of the essential components for the initiation of protein synthesis. Protects formylmethionyl-tRNA from spontaneous hydrolysis and promotes its binding to the 30S ribosomal subunits. Also involved in the hydrolysis of GTP during the formation of the 70S ribosomal complex. The polypeptide is Translation initiation factor IF-2 (Deinococcus radiodurans (strain ATCC 13939 / DSM 20539 / JCM 16871 / CCUG 27074 / LMG 4051 / NBRC 15346 / NCIMB 9279 / VKM B-1422 / R1)).